The chain runs to 417 residues: MSLSNKLSIRDLDLKNKRVLIRVDFNVPMKDGAITNNNRIVQALPTVKYALDNGASAVILMSHLGRPNGEAVAKYSLKPVAAEVEKLLGKPVEFLNDCVGPDVEKACQSATGGKVILLENLRFHIEEEGSAKVRWSKVKADAEAVKKFRASLTALADIYVNDAFGTAHRAHSSMVGVDLSQRAAGFLMQKELEYFAKALENPARPFLAILGGAKVSDKIQLIENMLDKVNALIVCGGMAFTFKKTLDNVKQIGKSLFDEAGSKLVRNLVKKAAEKNVKLVFPVDFVTADKFAPDANTGYATDADGIPDEWEGLDCGKKSSELFREEILKSKTIVWNGPSGVFEFDAFANGTKSVLNAVIEATKEGATTIIGGGDTATAALKWGAEGKVSHISTGGGASLELLEGKELPGVTALSSKN.

(2R)-3-phosphoglycerate is bound by residues V23, D24, F25, N26, N38, R39, S62, H63, G65, R66, L121, R122, H168, and R169. G212 serves as a coordination point for ADP. CDP is bound at residue G212. A213 and K214 together coordinate AMP. A213 serves as a coordination point for ATP. A213 contributes to the Mg(2+) binding site. D217 contacts CDP. Mg(2+) is bound at residue D217. Position 218 (K218) interacts with AMP. K218 contacts ATP. G236 serves as a coordination point for ADP. G236 is a CDP binding site. Residues G237 and G312 each contribute to the AMP site. Residues G237 and G312 each contribute to the ATP site. Residues G337 and F342 each coordinate CDP. F342 is an ADP binding site. An AMP-binding site is contributed by E343. ATP-binding residues include E343, D374, and T375. Residue D374 coordinates Mg(2+).

The protein belongs to the phosphoglycerate kinase family. In terms of assembly, monomer. Mg(2+) is required as a cofactor.

It localises to the cytoplasm. Its subcellular location is the mitochondrion. It catalyses the reaction (2R)-3-phosphoglycerate + ATP = (2R)-3-phospho-glyceroyl phosphate + ADP. Its pathway is carbohydrate degradation; glycolysis; pyruvate from D-glyceraldehyde 3-phosphate: step 2/5. Its function is as follows. Catalyzes one of the two ATP producing reactions in the glycolytic pathway via the reversible conversion of 1,3-diphosphoglycerate to 3-phosphoglycerate. Both L- and D- forms of purine and pyrimidine nucleotides can be used as substrates, but the activity is much lower on pyrimidines. Negatively regulates the biosynthesis of acetyl-CoA from pyruvate in the mitochondrion. The protein is Phosphoglycerate kinase 2 (PGK2) of Rhizopus niveus.